A 125-amino-acid chain; its full sequence is MENQPTRNTRSRKLRNKLKTSLLMSTGSVTSLIQSKDNWVDYLYACQPLNRELVRTAIELIDSSEMSPAYRLALAESIRVYPSWVTESMLQNSELASWIQSRIISLSEHQDWKLKYQPLLMTLDH.

The protein belongs to the orthoreovirus sigma-1s protein family.

This chain is Protein sigma-1-small (S1), found in Mammalia (T2J).